We begin with the raw amino-acid sequence, 313 residues long: Dehydrogenase/reductase SDR family member 1 (313 aa).

Isoleucine 19 provides a ligand contact to NAD(+). Residue arginine 21 is modified to Omega-N-methylarginine. Aspartate 64 is an NAD(+) binding site. Residue serine 151 coordinates substrate. NAD(+)-binding residues include tyrosine 163, lysine 167, and threonine 198. Tyrosine 163 (proton acceptor) is an active-site residue.

Belongs to the short-chain dehydrogenases/reductases (SDR) family.

The protein localises to the endoplasmic reticulum. It catalyses the reaction 17alpha-estradiol + NADP(+) = estrone + NADPH + H(+). The catalysed reaction is testosterone + NADP(+) = androst-4-ene-3,17-dione + NADPH + H(+). It carries out the reaction prostaglandin E1 + NADPH + H(+) = prostaglandin F1 + NADP(+). The enzyme catalyses isatin + NADPH + H(+) = 3-hydroxyindolin-2-one + NADP(+). Functionally, NADPH-dependent oxidoreductase which catalyzes the reduction of some steroids (estrone, androstene-3,17-dione and cortisone) as well as prostaglandin E1, isatin and xenobiotics in vitro. May have a role in steroid and/or xenobiotic metabolism. In Mus musculus (Mouse), this protein is Dehydrogenase/reductase SDR family member 1.